The chain runs to 156 residues: Ecotin (156 aa).

Residues 1–19 (MKALLIAAGVAALSSTAMA) form the signal peptide. A disulfide bridge links Cys-65 with Cys-102.

It belongs to the protease inhibitor I11 (ecotin) family. In terms of assembly, homodimer.

It localises to the periplasm. Functionally, general inhibitor of family S1 serine proteases. This Pseudomonas aeruginosa (strain LESB58) protein is Ecotin.